The primary structure comprises 433 residues: Pyrimidine-nucleoside phosphorylase (433 aa).

81–83 (KHS) lines the phosphate pocket. Positions 88 and 90 each coordinate K(+). Phosphate-binding positions include Thr92, 108-110 (KMS), and Thr120. Residues Arg168 and Lys187 each coordinate substrate. K(+) is bound by residues Leu243, Ala246, and Glu255.

The protein belongs to the thymidine/pyrimidine-nucleoside phosphorylase family. As to quaternary structure, homodimer. K(+) is required as a cofactor.

It catalyses the reaction uridine + phosphate = alpha-D-ribose 1-phosphate + uracil. It carries out the reaction thymidine + phosphate = 2-deoxy-alpha-D-ribose 1-phosphate + thymine. The catalysed reaction is 2'-deoxyuridine + phosphate = 2-deoxy-alpha-D-ribose 1-phosphate + uracil. Its function is as follows. Catalyzes phosphorolysis of the pyrimidine nucleosides uridine, thymidine and 2'-deoxyuridine with the formation of the corresponding pyrimidine base and ribose-1-phosphate. The protein is Pyrimidine-nucleoside phosphorylase (pdp) of Geobacillus stearothermophilus (Bacillus stearothermophilus).